The following is a 209-amino-acid chain: MDSDETGFEHSGLWVSVLAGLLLGACQAHPIPDSSPLLQFGGQVRQRYLYTDDAQQTEAHLEIREDGTVGGAADQSPESLLQLKALKPGVIQILGVKTSRFLCQRPDGALYGSLHFDPEACSFRELLLEDGYNVYQSEAHGLPLHLPGNKSPHRDPAPRGPARFLPLPGLPPALPEPPGILAPQPPDVGSSDPLSMVGPSQGRSPSYAS.

Positions 1–28 are cleaved as a signal peptide; that stretch reads MDSDETGFEHSGLWVSVLAGLLLGACQA. Residues 143–209 are disordered; that stretch reads PLHLPGNKSP…SQGRSPSYAS (67 aa). Residues 168–186 show a composition bias toward pro residues; the sequence is PGLPPALPEPPGILAPQPP.

This sequence belongs to the heparin-binding growth factors family. In terms of assembly, interacts (via C-terminus) with KLB; this interaction is direct. Interacts with FGFR4.

It is found in the secreted. Stimulates glucose uptake in differentiated adipocytes via the induction of glucose transporter SLC2A1/GLUT1 expression (but not SLC2A4/GLUT4 expression). Activity requires the presence of KLB. Regulates systemic glucose homeostasis and insulin sensitivity. This Homo sapiens (Human) protein is Fibroblast growth factor 21 (FGF21).